We begin with the raw amino-acid sequence, 181 residues long: MRSVITGVAGVGKTTVLDIVARESGIPVVNYGTLMFEVAKRRGLVENRDQIRKLSRETQVDLQKLAGEEIGKMENAIVDTHMSIKTPFGYLPGLPEWVLRSINASVFVIIEADPAIIKRRRDNDPTRARDDEGVDSIREHQEMNRYFAAAYSIFSGATVKIVKNEEGKPEQAADEIVRVIK.

7–15 (GVAGVGKTT) contributes to the ATP binding site.

Belongs to the archaeal adenylate kinase family.

It localises to the cytoplasm. It catalyses the reaction AMP + ATP = 2 ADP. This Thermoplasma volcanium (strain ATCC 51530 / DSM 4299 / JCM 9571 / NBRC 15438 / GSS1) protein is Adenylate kinase (adkA).